Here is a 1083-residue protein sequence, read N- to C-terminus: Carbamoyl phosphate synthase large chain (1083 aa).

The interval 1-402 (MPRRDDIKKI…SFQKALRGLE (402 aa)) is carboxyphosphate synthetic domain. Positions 129, 169, 175, 176, 208, 210, 215, 241, 242, 243, 285, and 299 each coordinate ATP. The 196-residue stretch at 133–328 (KQAMDKIGLD…IAKIAAKLAV (196 aa)) folds into the ATP-grasp 1 domain. Gln285, Glu299, and Asn301 together coordinate Mg(2+). 3 residues coordinate Mn(2+): Gln285, Glu299, and Asn301. Residues 403 to 557 (VGAFGFGSDP…YSTYESETEV (155 aa)) are oligomerization domain. The segment at 558 to 944 (PAKGDKKRVV…AFAKSQLAAG (387 aa)) is carbamoyl phosphate synthetic domain. One can recognise an ATP-grasp 2 domain in the interval 683-878 (SSLIDELGLR…VANLATKVMA (196 aa)). 10 residues coordinate ATP: Arg719, Arg758, Leu760, Glu765, Gly790, Val791, His792, Ser793, Gln833, and Glu849. Gln833, Glu849, and Asn851 together coordinate Mg(2+). Mn(2+) contacts are provided by Gln833, Glu849, and Asn851. One can recognise an MGS-like domain in the interval 945–1083 (TVLPESGKIF…SLQRRYAQNV (139 aa)). The segment at 945 to 1083 (TVLPESGKIF…SLQRRYAQNV (139 aa)) is allosteric domain.

It belongs to the CarB family. Composed of two chains; the small (or glutamine) chain promotes the hydrolysis of glutamine to ammonia, which is used by the large (or ammonia) chain to synthesize carbamoyl phosphate. Tetramer of heterodimers (alpha,beta)4. The cofactor is Mg(2+). Mn(2+) serves as cofactor.

The enzyme catalyses hydrogencarbonate + L-glutamine + 2 ATP + H2O = carbamoyl phosphate + L-glutamate + 2 ADP + phosphate + 2 H(+). It catalyses the reaction hydrogencarbonate + NH4(+) + 2 ATP = carbamoyl phosphate + 2 ADP + phosphate + 2 H(+). Its pathway is amino-acid biosynthesis; L-arginine biosynthesis; carbamoyl phosphate from bicarbonate: step 1/1. The protein operates within pyrimidine metabolism; UMP biosynthesis via de novo pathway; (S)-dihydroorotate from bicarbonate: step 1/3. In terms of biological role, large subunit of the glutamine-dependent carbamoyl phosphate synthetase (CPSase). CPSase catalyzes the formation of carbamoyl phosphate from the ammonia moiety of glutamine, carbonate, and phosphate donated by ATP, constituting the first step of 2 biosynthetic pathways, one leading to arginine and/or urea and the other to pyrimidine nucleotides. The large subunit (synthetase) binds the substrates ammonia (free or transferred from glutamine from the small subunit), hydrogencarbonate and ATP and carries out an ATP-coupled ligase reaction, activating hydrogencarbonate by forming carboxy phosphate which reacts with ammonia to form carbamoyl phosphate. This chain is Carbamoyl phosphate synthase large chain, found in Rhodopirellula baltica (strain DSM 10527 / NCIMB 13988 / SH1).